Consider the following 396-residue polypeptide: Acetate kinase (396 aa).

Position 8 (N8) interacts with Mg(2+). An ATP-binding site is contributed by K15. Substrate is bound at residue R89. D146 acts as the Proton donor/acceptor in catalysis. ATP is bound by residues 206-210 (HIGNG), 283-285 (DMR), and 331-335 (GVGEN). Mg(2+) is bound at residue E383.

It belongs to the acetokinase family. Homodimer. Mg(2+) serves as cofactor. The cofactor is Mn(2+).

The protein resides in the cytoplasm. It catalyses the reaction acetate + ATP = acetyl phosphate + ADP. Its pathway is metabolic intermediate biosynthesis; acetyl-CoA biosynthesis; acetyl-CoA from acetate: step 1/2. In terms of biological role, catalyzes the formation of acetyl phosphate from acetate and ATP. Can also catalyze the reverse reaction. The polypeptide is Acetate kinase (Streptococcus pneumoniae (strain 70585)).